The following is a 368-amino-acid chain: Phospho-N-acetylmuramoyl-pentapeptide-transferase (368 aa).

The next 9 membrane-spanning stretches (helical) occupy residues 30–50 (AAAI…IKYL), 72–92 (LPTM…LLWS), 95–115 (IDPH…IGFI), 139–159 (VTLG…SVLL), 169–189 (YLTI…ITAV), 208–228 (AIVV…VYAV), 238–258 (GGEI…FLWF), 264–286 (EIIM…ALLI), and 345–365 (KIVI…LMTL).

It belongs to the glycosyltransferase 4 family. MraY subfamily. Mg(2+) is required as a cofactor.

The protein localises to the cell inner membrane. The catalysed reaction is UDP-N-acetyl-alpha-D-muramoyl-L-alanyl-gamma-D-glutamyl-meso-2,6-diaminopimeloyl-D-alanyl-D-alanine + di-trans,octa-cis-undecaprenyl phosphate = di-trans,octa-cis-undecaprenyl diphospho-N-acetyl-alpha-D-muramoyl-L-alanyl-D-glutamyl-meso-2,6-diaminopimeloyl-D-alanyl-D-alanine + UMP. It participates in cell wall biogenesis; peptidoglycan biosynthesis. Catalyzes the initial step of the lipid cycle reactions in the biosynthesis of the cell wall peptidoglycan: transfers peptidoglycan precursor phospho-MurNAc-pentapeptide from UDP-MurNAc-pentapeptide onto the lipid carrier undecaprenyl phosphate, yielding undecaprenyl-pyrophosphoryl-MurNAc-pentapeptide, known as lipid I. The sequence is that of Phospho-N-acetylmuramoyl-pentapeptide-transferase from Pelodictyon phaeoclathratiforme (strain DSM 5477 / BU-1).